A 388-amino-acid polypeptide reads, in one-letter code: Queuine tRNA-ribosyltransferase (388 aa).

Catalysis depends on Asp-91, which acts as the Proton acceptor. Substrate is bound by residues 91-95 (DSGGY), Asp-145, Gln-190, and Gly-217. Positions 248–254 (GVGAPED) are RNA binding. Asp-267 (nucleophile) is an active-site residue. The interval 272-276 (TRLAR) is RNA binding; important for wobble base 34 recognition. Cys-305, Cys-307, Cys-310, and His-336 together coordinate Zn(2+).

The protein belongs to the queuine tRNA-ribosyltransferase family. Homodimer. Within each dimer, one monomer is responsible for RNA recognition and catalysis, while the other monomer binds to the replacement base PreQ1. The cofactor is Zn(2+).

It catalyses the reaction 7-aminomethyl-7-carbaguanine + guanosine(34) in tRNA = 7-aminomethyl-7-carbaguanosine(34) in tRNA + guanine. The protein operates within tRNA modification; tRNA-queuosine biosynthesis. In terms of biological role, catalyzes the base-exchange of a guanine (G) residue with the queuine precursor 7-aminomethyl-7-deazaguanine (PreQ1) at position 34 (anticodon wobble position) in tRNAs with GU(N) anticodons (tRNA-Asp, -Asn, -His and -Tyr). Catalysis occurs through a double-displacement mechanism. The nucleophile active site attacks the C1' of nucleotide 34 to detach the guanine base from the RNA, forming a covalent enzyme-RNA intermediate. The proton acceptor active site deprotonates the incoming PreQ1, allowing a nucleophilic attack on the C1' of the ribose to form the product. After dissociation, two additional enzymatic reactions on the tRNA convert PreQ1 to queuine (Q), resulting in the hypermodified nucleoside queuosine (7-(((4,5-cis-dihydroxy-2-cyclopenten-1-yl)amino)methyl)-7-deazaguanosine). This chain is Queuine tRNA-ribosyltransferase, found in Dictyoglomus turgidum (strain DSM 6724 / Z-1310).